Reading from the N-terminus, the 682-residue chain is Putative L-type lectin-domain containing receptor kinase I.1 (682 aa).

A signal peptide spans 1-19 (MAQRLHLLLLLFLICFVNL). The Extracellular segment spans residues 20 to 292 (ISFSSQQDLS…RPKKPEKTSP (273 aa)). The segment at 27–264 (DLSFIYNGFN…YQYILGWSFS (238 aa)) is legume-lectin like. Residues N60, N130, N187, N210, and N231 are each glycosylated (N-linked (GlcNAc...) asparagine). The helical transmembrane segment at 293–313 (LLIVLLIILAIIVMVVVGGFY) threads the bilayer. Over 314–682 (LYRRKKYAEV…SHTIIYGDGR (369 aa)) the chain is Cytoplasmic. The 275-residue stretch at 348–622 (FNKDGRLGRG…VQYINRHQRL (275 aa)) folds into the Protein kinase domain. ATP contacts are provided by residues 354 to 362 (LGRGGFGEV) and K376. D472 serves as the catalytic Proton acceptor.

It in the C-terminal section; belongs to the protein kinase superfamily. Ser/Thr protein kinase family. This sequence in the N-terminal section; belongs to the leguminous lectin family.

The protein localises to the cell membrane. The catalysed reaction is L-seryl-[protein] + ATP = O-phospho-L-seryl-[protein] + ADP + H(+). The enzyme catalyses L-threonyl-[protein] + ATP = O-phospho-L-threonyl-[protein] + ADP + H(+). Involved in resistance response to the pathogenic fungus Alternaria brassicicola. The polypeptide is Putative L-type lectin-domain containing receptor kinase I.1 (Arabidopsis thaliana (Mouse-ear cress)).